Here is a 292-residue protein sequence, read N- to C-terminus: MTLAKVFSQKLRELGISSIYIGHERPSLQSLAIKMLLKNYGLVEERREGMLITQDHGIKLISGKGTETSRYTFRKGGKKVSIHLPEYPKMVIDLGLFEFLNEEEKEKTLLQVDLCLSVIRKFLWDGNLTVVGKADYVLGRANIVQSLSLSDEDNPVILDPYGDVVATDQILRDHNVFVIGGIVDKGRRLDRATERLALSRGYSFPRVKIQLRGSIIGVPDEINKILEIILRVKELDQSLEEAIISLQSKSDKISRLLHDVQLYGMEVLEEEARWLRADDKVIEIVRSRLGKN.

One can recognise an SAM-dependent MTase TRM10-type domain in the interval 72–253; that stretch reads TFRKGGKKVS…ISLQSKSDKI (182 aa).

This sequence belongs to the class IV-like SAM-binding methyltransferase superfamily. TRM10 family.

The protein resides in the cytoplasm. The enzyme catalyses adenosine(9) in tRNA + S-adenosyl-L-methionine = N(1)-methyladenosine(9) in tRNA + S-adenosyl-L-homocysteine + H(+). Functionally, catalyzes the S-adenosyl-L-methionine-dependent formation of N(1)-methyladenine at position 9 (m1A9) in tRNA. This is tRNA (adenine(9)-N1)-methyltransferase from Sulfolobus acidocaldarius (strain ATCC 33909 / DSM 639 / JCM 8929 / NBRC 15157 / NCIMB 11770).